The primary structure comprises 175 residues: Adenine phosphoribosyltransferase (175 aa).

Belongs to the purine/pyrimidine phosphoribosyltransferase family. As to quaternary structure, homodimer.

It is found in the cytoplasm. The catalysed reaction is AMP + diphosphate = 5-phospho-alpha-D-ribose 1-diphosphate + adenine. The protein operates within purine metabolism; AMP biosynthesis via salvage pathway; AMP from adenine: step 1/1. Functionally, catalyzes a salvage reaction resulting in the formation of AMP, that is energically less costly than de novo synthesis. The polypeptide is Adenine phosphoribosyltransferase (Francisella tularensis subsp. tularensis (strain FSC 198)).